A 122-amino-acid chain; its full sequence is Large ribosomal subunit protein uL14c (122 aa).

The protein belongs to the universal ribosomal protein uL14 family. In terms of assembly, part of the 50S ribosomal subunit.

It is found in the plastid. Its subcellular location is the chloroplast. Binds to 23S rRNA. The polypeptide is Large ribosomal subunit protein uL14c (Phaseolus vulgaris (Kidney bean)).